Reading from the N-terminus, the 259-residue chain is Protein FAM220A (259 aa).

Disordered stretches follow at residues 1-44 and 131-154; these read MRDR…ADAP and LGGG…RVSR. The segment covering 138–152 has biased composition (basic and acidic residues); it reads TDGHRGQCPKGEPRV.

Interacts with transcriptional activator STAT3; the interaction occurs in both the nucleus and the cytoplasm, is enhanced by IL6 and promotes STAT3 dephosphorylation, leading to negative regulation of STAT3 transcriptional activator activity. Can interact with both unphosphorylated and phosphorylated STAT3 but interacts preferentially with phosphorylated STAT3 in the nucleus. Interacts with protein phosphatase PTPN2/TC45; this promotes interaction of PTPN2 with STAT3, leading to dephosphorylation of STAT3 by PTPN2.

The protein resides in the nucleus. It localises to the cytoplasm. The protein localises to the cytoplasmic vesicle. Its subcellular location is the secretory vesicle. It is found in the acrosome. Its function is as follows. Promotes dephosphorylation of transcriptional activator STAT3 by interacting with both STAT3 and protein phosphatase PTPN2. This promotes interaction of PTPN2 with STAT3 and mediates STAT3 dephosphorylation by PTPN2, leading to negative regulation of STAT3 transcriptional activator activity. May be required for spermiogenesis or sperm function. The sequence is that of Protein FAM220A from Homo sapiens (Human).